The primary structure comprises 396 residues: Subtilisin-like protease 5 (396 aa).

Residues 1-20 (MTGFFTILSFSLAALSVTNA) form the signal peptide. Residues 21–116 (AQILSVPKGA…VEPDAIISQH (96 aa)) constitute a propeptide that is removed on maturation. The 77-residue stretch at 37–113 (YIVVMKDDTS…VAFVEPDAII (77 aa)) folds into the Inhibitor I9 domain. Asn63 is a glycosylation site (N-linked (GlcNAc...) asparagine). Residues 125-396 (PWGLSRLSNR…SRLLYNGSGR (272 aa)) enclose the Peptidase S8 domain. Residues Asp156 and His187 each act as charge relay system in the active site. Asn230 and Asn248 each carry an N-linked (GlcNAc...) asparagine glycan. The active-site Charge relay system is the Ser342. Residues 376 to 389 (PTIRNPGPDTTSRL) show a composition bias toward polar residues. Residues 376-396 (PTIRNPGPDTTSRLLYNGSGR) are disordered. Residue Asn392 is glycosylated (N-linked (GlcNAc...) asparagine).

It belongs to the peptidase S8 family.

The protein resides in the secreted. Functionally, secreted subtilisin-like serine protease with keratinolytic activity that contributes to pathogenicity. The sequence is that of Subtilisin-like protease 5 (SUB5) from Trichophyton verrucosum (Cattle ringworm fungus).